Reading from the N-terminus, the 156-residue chain is Regulatory protein RecX (156 aa).

Belongs to the RecX family.

The protein resides in the cytoplasm. Modulates RecA activity. This chain is Regulatory protein RecX, found in Pseudomonas putida (strain W619).